We begin with the raw amino-acid sequence, 196 residues long: Holliday junction branch migration complex subunit RuvA (196 aa).

The interval 1-63 is domain I; it reads MLDFIKGEIV…EETHQLFGFI (63 aa). The tract at residues 64 to 142 is domain II; that stretch reads DKKERQLFTH…PDNIPSSDTI (79 aa). The tract at residues 143–146 is flexible linker; the sequence is ITNI. The domain III stretch occupies residues 146–196; it reads ISSNITKEAITALITLGFSQSASQKVVNKIVSNNSSSTTIEQIIKKALKLL.

The protein belongs to the RuvA family. As to quaternary structure, homotetramer. Forms an RuvA(8)-RuvB(12)-Holliday junction (HJ) complex. HJ DNA is sandwiched between 2 RuvA tetramers; dsDNA enters through RuvA and exits via RuvB. An RuvB hexamer assembles on each DNA strand where it exits the tetramer. Each RuvB hexamer is contacted by two RuvA subunits (via domain III) on 2 adjacent RuvB subunits; this complex drives branch migration. In the full resolvosome a probable DNA-RuvA(4)-RuvB(12)-RuvC(2) complex forms which resolves the HJ.

It is found in the cytoplasm. The RuvA-RuvB-RuvC complex processes Holliday junction (HJ) DNA during genetic recombination and DNA repair, while the RuvA-RuvB complex plays an important role in the rescue of blocked DNA replication forks via replication fork reversal (RFR). RuvA specifically binds to HJ cruciform DNA, conferring on it an open structure. The RuvB hexamer acts as an ATP-dependent pump, pulling dsDNA into and through the RuvAB complex. HJ branch migration allows RuvC to scan DNA until it finds its consensus sequence, where it cleaves and resolves the cruciform DNA. The sequence is that of Holliday junction branch migration complex subunit RuvA from Azobacteroides pseudotrichonymphae genomovar. CFP2.